A 148-amino-acid polypeptide reads, in one-letter code: Large ribosomal subunit protein uL15 (148 aa).

The disordered stretch occupies residues 1-47; the sequence is MAFSLENLRPAPGSRPKSKRVGRGSSSGKGKTSSRGHKGQGRGTGKV.

It belongs to the universal ribosomal protein uL15 family. Part of the 50S ribosomal subunit.

Functionally, binds to the 23S rRNA. The chain is Large ribosomal subunit protein uL15 from Kosmotoga olearia (strain ATCC BAA-1733 / DSM 21960 / TBF 19.5.1).